Here is a 461-residue protein sequence, read N- to C-terminus: Bifunctional protein GlmU (461 aa).

Positions 1–234 are pyrophosphorylase; it reads MSLSVVILAA…EIEVEGANNR (234 aa). UDP-N-acetyl-alpha-D-glucosamine is bound by residues 8–11, lysine 22, glutamine 77, 82–83, 104–106, glycine 141, glutamate 159, asparagine 174, and asparagine 232; these read LAAG, GT, and YGD. Aspartate 106 contributes to the Mg(2+) binding site. Asparagine 232 contributes to the Mg(2+) binding site. The segment at 235–255 is linker; sequence VQLATLERAYQARIAEELMIA. The N-acetyltransferase stretch occupies residues 256–461; sequence GASLRDPARI…AGWQRPVKKS (206 aa). Residues arginine 338 and lysine 356 each coordinate UDP-N-acetyl-alpha-D-glucosamine. Histidine 368 functions as the Proton acceptor in the catalytic mechanism. Positions 371 and 382 each coordinate UDP-N-acetyl-alpha-D-glucosamine. Acetyl-CoA-binding positions include alanine 385, 391–392, serine 410, alanine 428, and arginine 445; that span reads NY.

It in the N-terminal section; belongs to the N-acetylglucosamine-1-phosphate uridyltransferase family. In the C-terminal section; belongs to the transferase hexapeptide repeat family. Homotrimer. Mg(2+) is required as a cofactor.

The protein localises to the cytoplasm. It carries out the reaction alpha-D-glucosamine 1-phosphate + acetyl-CoA = N-acetyl-alpha-D-glucosamine 1-phosphate + CoA + H(+). It catalyses the reaction N-acetyl-alpha-D-glucosamine 1-phosphate + UTP + H(+) = UDP-N-acetyl-alpha-D-glucosamine + diphosphate. It functions in the pathway nucleotide-sugar biosynthesis; UDP-N-acetyl-alpha-D-glucosamine biosynthesis; N-acetyl-alpha-D-glucosamine 1-phosphate from alpha-D-glucosamine 6-phosphate (route II): step 2/2. The protein operates within nucleotide-sugar biosynthesis; UDP-N-acetyl-alpha-D-glucosamine biosynthesis; UDP-N-acetyl-alpha-D-glucosamine from N-acetyl-alpha-D-glucosamine 1-phosphate: step 1/1. Its pathway is bacterial outer membrane biogenesis; LPS lipid A biosynthesis. Its function is as follows. Catalyzes the last two sequential reactions in the de novo biosynthetic pathway for UDP-N-acetylglucosamine (UDP-GlcNAc). The C-terminal domain catalyzes the transfer of acetyl group from acetyl coenzyme A to glucosamine-1-phosphate (GlcN-1-P) to produce N-acetylglucosamine-1-phosphate (GlcNAc-1-P), which is converted into UDP-GlcNAc by the transfer of uridine 5-monophosphate (from uridine 5-triphosphate), a reaction catalyzed by the N-terminal domain. The protein is Bifunctional protein GlmU of Colwellia psychrerythraea (strain 34H / ATCC BAA-681) (Vibrio psychroerythus).